Here is a 648-residue protein sequence, read N- to C-terminus: Protein associated with UVRAG as autophagy enhancer (648 aa).

2 stretches are compositionally biased toward polar residues: residues glutamine 131–serine 146 and proline 157–arginine 173. A disordered region spans residues glutamine 131–arginine 173. Serine 144 is modified (phosphoserine). The interval glutamate 183–glutamate 222 is interaction with UVRAG. An N6-acetyllysine mark is found at lysine 469, lysine 509, lysine 519, lysine 559, and lysine 619.

As to quaternary structure, interacts with UVRAG; the interaction is direct and promotes association with the PI3K/PI3KC3 and HOPS complexes. Interacts with STX17. Post-translationally, phosphorylated by MTOR at Ser-144 under nutrient-rich conditions. Phosphorylation prevents acetylation by KAT5/TIP60 and impairs RUBCNL/PACER function and autophagosome maturation. Under autophagy induction, Phosphorylation by MTOR is repressed, enabling acetylation by KAT5/TIP60. In terms of processing, acetylated by KAT5/TIP60 under autophagy induction, promoting autophagosome maturation and lipid metabolism. Acetylation is prevented by phosphorylation by MTOR. Lys-469 and Lys-559 constitute the key sites for tuning function in autophagy.

The protein localises to the cytoplasmic vesicle. The protein resides in the autophagosome membrane. Regulator of autophagy that promotes autophagosome maturation by facilitating the biogenesis of phosphatidylinositol 3-phosphate (PtdIns(3)P) in late steps of autophagy. Acts by antagonizing RUBCN, thereby stimulating phosphatidylinositol 3-kinase activity of the PI3K/PI3KC3 complex. Following anchorage to the autophagosomal SNARE STX17, promotes the recruitment of PI3K/PI3KC3 and HOPS complexes to the autophagosome to regulate the fusion specificity of autophagosomes with late endosomes/lysosomes. Binds phosphoinositides phosphatidylinositol 3-phosphate (PtdIns(3)P), 4-phosphate (PtdIns(4)P) and 5-phosphate (PtdIns(5)P). In addition to its role in autophagy, acts as a regulator of lipid and glycogen homeostasis. May act as a tumor suppressor. The chain is Protein associated with UVRAG as autophagy enhancer from Mus musculus (Mouse).